Consider the following 438-residue polypeptide: tRNA modification GTPase MnmE (438 aa).

(6S)-5-formyl-5,6,7,8-tetrahydrofolate-binding residues include R20, E79, and K119. Residues 215-360 form the TrmE-type G domain; that stretch reads GVEVAIVGPP…LEAALAARVG (146 aa). GTP-binding positions include 225–230, 244–250, and 269–272; these read NAGKSS, SDEAGTT, and DTAG. Positions 229 and 250 each coordinate Mg(2+). K438 is a binding site for (6S)-5-formyl-5,6,7,8-tetrahydrofolate.

Belongs to the TRAFAC class TrmE-Era-EngA-EngB-Septin-like GTPase superfamily. TrmE GTPase family. In terms of assembly, homodimer. Heterotetramer of two MnmE and two MnmG subunits. It depends on K(+) as a cofactor.

It localises to the cytoplasm. Functionally, exhibits a very high intrinsic GTPase hydrolysis rate. Involved in the addition of a carboxymethylaminomethyl (cmnm) group at the wobble position (U34) of certain tRNAs, forming tRNA-cmnm(5)s(2)U34. The chain is tRNA modification GTPase MnmE from Parvibaculum lavamentivorans (strain DS-1 / DSM 13023 / NCIMB 13966).